We begin with the raw amino-acid sequence, 145 residues long: Large ribosomal subunit protein uL11 (145 aa).

Belongs to the universal ribosomal protein uL11 family. In terms of assembly, part of the ribosomal stalk of the 50S ribosomal subunit. Interacts with L10 and the large rRNA to form the base of the stalk. L10 forms an elongated spine to which L12 dimers bind in a sequential fashion forming a multimeric L10(L12)X complex. In terms of processing, one or more lysine residues are methylated.

In terms of biological role, forms part of the ribosomal stalk which helps the ribosome interact with GTP-bound translation factors. The protein is Large ribosomal subunit protein uL11 of Rickettsia prowazekii (strain Madrid E).